The following is a 1047-amino-acid chain: Rab11 family-interacting protein 3 (1047 aa).

3 disordered regions span residues 1–107 (MELC…WPQE), 311–335 (SHSC…DVSH), and 475–496 (PGPP…TAQE). Residues 64 to 73 (EPHAPSRWAK) show a composition bias toward basic and acidic residues. 2 consecutive EF-hand domains span residues 496 to 531 (EEGA…YGAE) and 528 to 563 (YGAE…IRNG). Ca(2+) contacts are provided by aspartate 509, aspartate 511, aspartate 513, aspartate 520, aspartate 541, serine 543, and aspartate 552. Serine 641, serine 765, and serine 829 each carry phosphoserine. A coiled-coil region spans residues 750–985 (EEDIADKVIF…NGQIITLSIQ (236 aa)). Positions 775 to 879 (GEQHGRLRQE…MLDEIEELTQ (105 aa)) are ARF-binding domain (ABD). The tract at residues 882–906 (SEEQENKRKMGDRLSHERHQFQRDK) is disordered. 2 positions are modified to phosphoserine: serine 938 and serine 939. In terms of domain architecture, FIP-RBD spans 985 to 1047 (QGAKSLFSTS…ETNPSILEVK (63 aa)).

Homodimer. Interacts with RAB11A; the interaction is direct and is required for the recruitment to endosomes. Interacts with RAB11B. Forms a ternary complex with RAB11A and dynein intermediate chain DYNC1LI1; RAB11FIP3 links RAB11A to dynein and the interaction regulates endocytic trafficking. Interacts with dynein intermediate chain and dynactin (DCTN1); the interaction activates dynein processivity. Interacts with ARF6 and EXOC7; the interaction serves for recruitment and tethering of recycling endosomes-derived vesicles to the cleavage furrow/midbody. Interacts with RACGAP1/MgcRacGAP; the interaction occurs at late telophase and is required for recruitment and tethering of recycling endosomes-derived vesicles to the cleavage furrow/midbody. Forms a complex with RAB11A and Rabin8/RAB3IP, probably a heterohexamer with two of each protein subunit, where RAB3IP and RAB11FIP3 simultaneously bind to RAB11A; the complex promotes preciliary trafficking. Forms a complex containing RAB11A, ASAP1, RAB3IP, RAP11FIP3 and ARF4; the complex promotes preciliary trafficking; the complex binds to RHO in photoreceptor cells and promotes RHO ciliary transport. Interacts with RAB11FIP4. Interacts with RAB25.

Its subcellular location is the recycling endosome membrane. The protein localises to the cytoplasm. It is found in the cytoskeleton. It localises to the microtubule organizing center. The protein resides in the centrosome. Its subcellular location is the cleavage furrow. The protein localises to the midbody. It is found in the golgi apparatus membrane. It localises to the golgi apparatus. The protein resides in the trans-Golgi network membrane. Functionally, downstream effector molecule for Rab11 GTPase which is involved in endocytic trafficking, cytokinesis and intracellular ciliogenesis by participating in membrane delivery. Recruited by Rab11 to endosomes where it links Rab11 to dynein motor complex. The functional Rab11-RAB11FIP3-dynein complex regulates the movement of peripheral sorting endosomes (SE) along microtubule tracks toward the microtubule organizing center/centrosome, generating the endocytic recycling compartment (ERC) during interphase of cell cycle. Facilitates the interaction between dynein and dynactin and activates dynein processivity. Binding with ASAP1 is needed to regulate the pericentrosomal localization of recycling endosomes. The Rab11-RAB11FIP3 complex is also implicated in the transport during telophase of vesicles derived from recycling endosomes to the cleavage furrow via centrosome-anchored microtubules, where the vesicles function to deliver membrane during late cytokinesis and abscission. The recruitment of Rab11-RAB11FIP3-containing endosomes to the cleavage furrow and tethering to the midbody is co-mediated by RAB11FIP3 interaction with ARF6-exocyst and RACGAP1-MKLP1 tethering complexes. Also involved in the Rab11-Rabin8-Rab8 ciliogenesis cascade by facilitating the orderly assembly of a ciliary targeting complex containing Rab11, ASAP1, Rabin8/RAB3IP, RAB11FIP3 and ARF4, which directs preciliary vesicle trafficking to mother centriole and ciliogenesis initiation. Also promotes the activity of Rab11 and ASAP1 in the ARF4-dependent Golgi-to-cilia transport of the sensory receptor rhodopsin. Competes with WDR44 for binding to Rab11, which controls intracellular ciliogenesis pathway. May play a role in breast cancer cell motility by regulating actin cytoskeleton. The sequence is that of Rab11 family-interacting protein 3 from Mus musculus (Mouse).